The following is a 154-amino-acid chain: NADPH-dependent 7-cyano-7-deazaguanine reductase (154 aa).

Residue Cys-52 is the Thioimide intermediate of the active site. Asp-59 acts as the Proton donor in catalysis. Substrate-binding positions include 74–76 and 93–94; these read VES and HE.

The protein belongs to the GTP cyclohydrolase I family. QueF type 1 subfamily.

The protein resides in the cytoplasm. The catalysed reaction is 7-aminomethyl-7-carbaguanine + 2 NADP(+) = 7-cyano-7-deazaguanine + 2 NADPH + 3 H(+). The protein operates within tRNA modification; tRNA-queuosine biosynthesis. Catalyzes the NADPH-dependent reduction of 7-cyano-7-deazaguanine (preQ0) to 7-aminomethyl-7-deazaguanine (preQ1). This chain is NADPH-dependent 7-cyano-7-deazaguanine reductase, found in Paracoccus denitrificans (strain Pd 1222).